An 86-amino-acid chain; its full sequence is Small ribosomal subunit protein bS16 (86 aa).

It belongs to the bacterial ribosomal protein bS16 family.

The polypeptide is Small ribosomal subunit protein bS16 (Xylella fastidiosa (strain M12)).